The sequence spans 492 residues: NADH-quinone oxidoreductase subunit N (492 aa).

The next 14 membrane-spanning stretches (helical) occupy residues 13 to 33 (MMTP…MDLF), 42 to 62 (PLAW…IGLI), 79 to 99 (FGKA…LLAF), 111 to 131 (GEFY…ASSG), 133 to 153 (LITL…LAGI), 168 to 188 (VING…IFGL), 211 to 231 (YILA…ISSV), 251 to 271 (FLSV…FITI), 284 to 304 (SLLF…MIIG), 318 to 340 (FAYS…SWVM), 344 to 366 (IWFY…QRIS), 388 to 408 (AVAM…AGFI), 426 to 446 (VLAA…FGIF), and 463 to 483 (PIGL…FGVV).

This sequence belongs to the complex I subunit 2 family. NDH-1 is composed of 14 different subunits. Subunits NuoA, H, J, K, L, M, N constitute the membrane sector of the complex.

The protein resides in the cell membrane. The enzyme catalyses a quinone + NADH + 5 H(+)(in) = a quinol + NAD(+) + 4 H(+)(out). Functionally, NDH-1 shuttles electrons from NADH, via FMN and iron-sulfur (Fe-S) centers, to quinones in the respiratory chain. The immediate electron acceptor for the enzyme in this species is believed to be a menaquinone. Couples the redox reaction to proton translocation (for every two electrons transferred, four hydrogen ions are translocated across the cytoplasmic membrane), and thus conserves the redox energy in a proton gradient. This Geobacillus sp. (strain WCH70) protein is NADH-quinone oxidoreductase subunit N.